The following is a 619-amino-acid chain: Low-temperature-induced 65 kDa protein (619 aa).

Disordered stretches follow at residues methionine 1–threonine 383 and leucine 408–arginine 429. Positions tyrosine 9 to alanine 33 are enriched in basic and acidic residues. A compositionally biased stretch (basic residues) spans valine 36–lysine 48. The span at valine 62–aspartate 73 shows a compositional bias: acidic residues. Positions phenylalanine 175–glutamine 186 are enriched in basic and acidic residues. Positions proline 188 to serine 197 are enriched in polar residues. The span at valine 221–glutamate 231 shows a compositional bias: basic and acidic residues. The span at glycine 245–threonine 254 shows a compositional bias: polar residues. Basic and acidic residues-rich tracts occupy residues lysine 276–isoleucine 309 and alanine 323–valine 337. Tandem repeats lie at residues valine 404–leucine 408, valine 442–leucine 446, valine 460–leucine 464, isoleucine 490–leucine 494, and isoleucine 507–leucine 511. The interval valine 404–leucine 511 is 5 X 5 AA repeats of [IV]-[AMS]-[EST]-K-L. The interval methionine 461–threonine 485 is disordered. Position 536 is a phosphoserine (serine 536). The segment covering aspartate 537 to glycine 555 has biased composition (basic and acidic residues). The tract at residues aspartate 537–asparagine 619 is disordered. The segment covering glutamate 583 to glycine 593 has biased composition (polar residues). Residues serine 603–glycine 613 show a composition bias toward gly residues.

The protein belongs to the LTI78/LTI65 family.

In Arabidopsis thaliana (Mouse-ear cress), this protein is Low-temperature-induced 65 kDa protein (LTI65).